The following is a 122-amino-acid chain: Aspartate 1-decarboxylase (122 aa).

Catalysis depends on serine 25, which acts as the Schiff-base intermediate with substrate; via pyruvic acid. Serine 25 is modified (pyruvic acid (Ser)). Threonine 57 provides a ligand contact to substrate. Tyrosine 58 (proton donor) is an active-site residue. 73-75 (GAA) provides a ligand contact to substrate.

It belongs to the PanD family. In terms of assembly, heterooctamer of four alpha and four beta subunits. Pyruvate serves as cofactor. In terms of processing, is synthesized initially as an inactive proenzyme, which is activated by self-cleavage at a specific serine bond to produce a beta-subunit with a hydroxyl group at its C-terminus and an alpha-subunit with a pyruvoyl group at its N-terminus.

It is found in the cytoplasm. The catalysed reaction is L-aspartate + H(+) = beta-alanine + CO2. Its pathway is cofactor biosynthesis; (R)-pantothenate biosynthesis; beta-alanine from L-aspartate: step 1/1. Catalyzes the pyruvoyl-dependent decarboxylation of aspartate to produce beta-alanine. The polypeptide is Aspartate 1-decarboxylase (Bordetella parapertussis (strain 12822 / ATCC BAA-587 / NCTC 13253)).